The chain runs to 153 residues: Transcriptional repressor NrdR (153 aa).

A zinc finger spans residues C3 to C34. Residues L49–T139 form the ATP-cone domain.

It belongs to the NrdR family. It depends on Zn(2+) as a cofactor.

Its function is as follows. Negatively regulates transcription of bacterial ribonucleotide reductase nrd genes and operons by binding to NrdR-boxes. In Lachnoclostridium phytofermentans (strain ATCC 700394 / DSM 18823 / ISDg) (Clostridium phytofermentans), this protein is Transcriptional repressor NrdR.